The sequence spans 273 residues: 3-keto-5-aminohexanoate cleavage enzyme (273 aa).

Glu-14 is a binding site for (5S)-5-amino-3-oxohexanoate. Zn(2+)-binding residues include His-46 and His-48. (5S)-5-amino-3-oxohexanoate-binding residues include Ser-82, Gly-85, and Ser-106. Position 227 (Glu-227) interacts with Zn(2+).

The protein belongs to the BKACE family. Kce subfamily. Homotetramer. Requires Zn(2+) as cofactor.

The enzyme catalyses (5S)-5-amino-3-oxohexanoate + acetyl-CoA = (3S)-3-aminobutanoyl-CoA + acetoacetate. The protein operates within amino-acid degradation; L-lysine degradation via acetate pathway. Functionally, involved in the anaerobic fermentation of lysine. Catalyzes the reversible reaction between 3-keto-5-aminohexanoate (KAH) and acetyl-CoA to form 3-aminobutyryl-CoA and acetoacetate. The reaction involves the deprotonation of KAH, the nucleophilic addition onto acetyl-CoA and the intramolecular transfer of the CoA moiety. The protein is 3-keto-5-aminohexanoate cleavage enzyme of Acetoanaerobium sticklandii (strain ATCC 12662 / DSM 519 / JCM 1433 / CCUG 9281 / NCIMB 10654 / HF) (Clostridium sticklandii).